A 555-amino-acid chain; its full sequence is Cytochrome P450 monooxygeanse terQ (555 aa).

Residues Val10–Leu30 form a helical membrane-spanning segment. Cys479 is a heme binding site. The interval Asp535 to Ser555 is disordered.

The protein belongs to the cytochrome P450 family. It depends on heme as a cofactor.

Its subcellular location is the membrane. It participates in secondary metabolite biosynthesis. In terms of biological role, cytochrome P450 monooxygeanse; part of the gene cluster that mediates the biosynthesis of terpendoles, indole-diterpene (IDT) mycotoxins including terpendole I, terpendole K, terpendole C, as well as the kinesin Eg5 inhibitor terpendole E. TerQ is a C11-hydroxylating enzyme that converts paspalline into terpendole E. Is also able to hydroxylate 13-desoxyterpendole I at C-13 to produce terpendole I. Terpendoles biosynthesis begins with the synthesis of geranylgeranyl diphosphate (GGPP) by a yet unidentified GGPP synthase. Condensation of indole-3-glycerol phosphate with GGPP by the prenyltransferase terC then forms 3-geranylgeranylindole (3-GGI), followed by epoxidation and cyclization of this intermediate (by the FAD-dependent monooxygeanse terM and the terpene cyclase terB) to form paspaline. The cytochrome monooxygenase terQ then hydroxylates paspalline at C-11 to yield terpendole E. The cytochrome monooxygenase terP converts terpendole E to 13-desoxyterpendole I, and terQ converts 13-desoxyterpendole I into terpendole I. TerF and terK are required for conversion of terpendole I to terpendole C which is further converted to terpendole K. In Tolypocladium album (Soil fungus), this protein is Cytochrome P450 monooxygeanse terQ.